Consider the following 203-residue polypeptide: NAD(P)H dehydrogenase (quinone) (203 aa).

Positions V3 to I194 constitute a Flavodoxin-like domain. FMN-binding positions include S9–V14 and T82–F84. Y11 contributes to the NAD(+) binding site. Position 102 (W102) interacts with substrate. Residues S117–G123 and H138 contribute to the FMN site.

The protein belongs to the WrbA family. Requires FMN as cofactor.

The enzyme catalyses a quinone + NADH + H(+) = a quinol + NAD(+). It carries out the reaction a quinone + NADPH + H(+) = a quinol + NADP(+). The polypeptide is NAD(P)H dehydrogenase (quinone) (Solidesulfovibrio magneticus (strain ATCC 700980 / DSM 13731 / RS-1) (Desulfovibrio magneticus)).